The following is a 242-amino-acid chain: Small ribosomal subunit protein uS3 (242 aa).

One can recognise a KH type-2 domain in the interval 39–109 (IRQYVKATLA…QIRINVVEVT (71 aa)). Residues 220–242 (KVNQPKRRQQKRRQQYDDRSNEG) form a disordered region. Basic residues predominate over residues 223-232 (QPKRRQQKRR). Residues 233-242 (QQYDDRSNEG) are compositionally biased toward basic and acidic residues.

It belongs to the universal ribosomal protein uS3 family. As to quaternary structure, part of the 30S ribosomal subunit. Forms a tight complex with proteins S10 and S14.

Its function is as follows. Binds the lower part of the 30S subunit head. Binds mRNA in the 70S ribosome, positioning it for translation. In Trichodesmium erythraeum (strain IMS101), this protein is Small ribosomal subunit protein uS3.